Here is a 649-residue protein sequence, read N- to C-terminus: Threonine--tRNA ligase (649 aa).

The TGS domain occupies 1-60 (MHVTLPDGKQLDLQAGATALDVARALGPRLAQDALAALVNGELMDLMTPLPEGAQVRLIT). The interval 248–544 (DHRKLGRELE…LIEHYGGDFP (297 aa)) is catalytic. Cysteine 341, histidine 392, and histidine 521 together coordinate Zn(2+).

Belongs to the class-II aminoacyl-tRNA synthetase family. As to quaternary structure, homodimer. It depends on Zn(2+) as a cofactor.

It is found in the cytoplasm. It carries out the reaction tRNA(Thr) + L-threonine + ATP = L-threonyl-tRNA(Thr) + AMP + diphosphate + H(+). Functionally, catalyzes the attachment of threonine to tRNA(Thr) in a two-step reaction: L-threonine is first activated by ATP to form Thr-AMP and then transferred to the acceptor end of tRNA(Thr). Also edits incorrectly charged L-seryl-tRNA(Thr). This Deinococcus geothermalis (strain DSM 11300 / CIP 105573 / AG-3a) protein is Threonine--tRNA ligase.